Here is a 519-residue protein sequence, read N- to C-terminus: Glucose-1-phosphate adenylyltransferase large subunit 3, chloroplastic/amyloplastic (519 aa).

The transit peptide at 1–74 (MQFSSVFPLE…DAGPDTLHVR (74 aa)) directs the protein to the chloroplast.

Belongs to the bacterial/plant glucose-1-phosphate adenylyltransferase family. In terms of assembly, heterotetramer composed of two small and two large subunits. As to expression, expressed in stems.

It localises to the plastid. The protein localises to the chloroplast. It carries out the reaction alpha-D-glucose 1-phosphate + ATP + H(+) = ADP-alpha-D-glucose + diphosphate. It functions in the pathway glycan biosynthesis; starch biosynthesis. Activated by 3'phosphoglycerate, inhibited by orthophosphate. Allosteric regulation. Functionally, involved in synthesis of starch. Catalyzes the synthesis of ADP-glucose, a molecule that serves as an activated glycosyl donor for alpha-1,4-glucan synthesis. Essential for starch synthesis in leaf chloroplasts. The protein is Glucose-1-phosphate adenylyltransferase large subunit 3, chloroplastic/amyloplastic of Oryza sativa subsp. japonica (Rice).